Reading from the N-terminus, the 45-residue chain is Photosystem II reaction center protein K (45 aa).

The propeptide occupies 1 to 8 (MDFALLLA). Residues 24–44 (LPLIPLFFLLLAFVWQAAVGF) form a helical membrane-spanning segment.

The protein belongs to the PsbK family. In terms of assembly, PSII is composed of 1 copy each of membrane proteins PsbA, PsbB, PsbC, PsbD, PsbE, PsbF, PsbH, PsbI, PsbJ, PsbK, PsbL, PsbM, PsbT, PsbX, PsbY, PsbZ, Psb30/Ycf12, peripheral proteins PsbO, CyanoQ (PsbQ), PsbU, PsbV and a large number of cofactors. It forms dimeric complexes.

Its subcellular location is the cellular thylakoid membrane. In terms of biological role, one of the components of the core complex of photosystem II (PSII). PSII is a light-driven water:plastoquinone oxidoreductase that uses light energy to abstract electrons from H(2)O, generating O(2) and a proton gradient subsequently used for ATP formation. It consists of a core antenna complex that captures photons, and an electron transfer chain that converts photonic excitation into a charge separation. In Gloeothece citriformis (strain PCC 7424) (Cyanothece sp. (strain PCC 7424)), this protein is Photosystem II reaction center protein K.